We begin with the raw amino-acid sequence, 105 residues long: UPF0045 protein ECM15 (105 aa).

It belongs to the UPF0045 family.

This Eremothecium gossypii (strain ATCC 10895 / CBS 109.51 / FGSC 9923 / NRRL Y-1056) (Yeast) protein is UPF0045 protein ECM15 (ECM15).